The primary structure comprises 113 residues: uncharacterized protein (113 aa).

Residues Met1 to Ser22 form the signal peptide. N-linked (GlcNAc...) asparagine glycosylation is present at Asn47.

Its subcellular location is the secreted. This is an uncharacterized protein from Caenorhabditis elegans.